The sequence spans 112 residues: Protein ORF1 (112 aa).

The segment covering 1–10 has biased composition (low complexity); the sequence is MEGTDWSGWG. The interval 1–20 is disordered; the sequence is MEGTDWSGWGDDSDFPWPKG. Residues 51–71 form a helical membrane-spanning segment; sequence IAFVILIVSLFVLLLGVLLAC.

Its subcellular location is the host membrane. The protein is Protein ORF1 of Snake adenovirus serotype 1 (SnAdV-1).